The following is a 283-amino-acid chain: MAISAAQVKELRERTGAGMMDCKKALEETNGDMELAIDNMRKSGAAKAAKKAGNIAADGTILIKNGEGFAVLLEVNCQTDFVAKDANFLGFANAVLDVAAASKVTLEDLKAQFEEARVALVAKIGENINVRRVEYIDGAKLASYRHGERIGVVVTGDADEETLKHLAMHVAASKPEYVNPEDVPADVVAREQALQIEISMNEGKPADIAEKMVVGRMKKFTGEISLTGQAYIMEPKKTVGEFLKEKGAKVTNFIRLEVGEGIEKKEEDFAAEVAAQIAASKKA.

The interval 79 to 82 (TDFV) is involved in Mg(2+) ion dislocation from EF-Tu.

It belongs to the EF-Ts family.

It localises to the cytoplasm. In terms of biological role, associates with the EF-Tu.GDP complex and induces the exchange of GDP to GTP. It remains bound to the aminoacyl-tRNA.EF-Tu.GTP complex up to the GTP hydrolysis stage on the ribosome. This Shewanella oneidensis (strain ATCC 700550 / JCM 31522 / CIP 106686 / LMG 19005 / NCIMB 14063 / MR-1) protein is Elongation factor Ts.